Here is a 391-residue protein sequence, read N- to C-terminus: Sister chromatid cohesion protein DCC1 (391 aa).

The protein belongs to the DCC1 family. In terms of assembly, component of the ctf18-RFC complex which consists of ctf18, ctf8, dscc1 and the RFC complex.

It is found in the nucleus. Its function is as follows. Loads pcna onto primed templates regulating velocity, spacing and restart activity of replication forks. May couple DNA replication to sister chromatid cohesion. The sequence is that of Sister chromatid cohesion protein DCC1 (dscc1) from Xenopus tropicalis (Western clawed frog).